We begin with the raw amino-acid sequence, 435 residues long: 3-phosphoshikimate 1-carboxyvinyltransferase (435 aa).

Residues lysine 21, serine 22, and arginine 26 each coordinate 3-phosphoshikimate. Residue lysine 21 coordinates phosphoenolpyruvate. 2 residues coordinate phosphoenolpyruvate: glycine 100 and arginine 128. The 3-phosphoshikimate site is built by serine 171, serine 172, glutamine 173, serine 199, aspartate 313, and lysine 340. Glutamine 173 contacts phosphoenolpyruvate. Aspartate 313 acts as the Proton acceptor in catalysis. The phosphoenolpyruvate site is built by arginine 344, arginine 386, and lysine 412.

Belongs to the EPSP synthase family. In terms of assembly, monomer.

The protein localises to the cytoplasm. The catalysed reaction is 3-phosphoshikimate + phosphoenolpyruvate = 5-O-(1-carboxyvinyl)-3-phosphoshikimate + phosphate. It functions in the pathway metabolic intermediate biosynthesis; chorismate biosynthesis; chorismate from D-erythrose 4-phosphate and phosphoenolpyruvate: step 6/7. Its function is as follows. Catalyzes the transfer of the enolpyruvyl moiety of phosphoenolpyruvate (PEP) to the 5-hydroxyl of shikimate-3-phosphate (S3P) to produce enolpyruvyl shikimate-3-phosphate and inorganic phosphate. This chain is 3-phosphoshikimate 1-carboxyvinyltransferase, found in Clostridium novyi (strain NT).